Here is a 153-residue protein sequence, read N- to C-terminus: Ribosome maturation factor RimP (153 aa).

The protein belongs to the RimP family.

The protein localises to the cytoplasm. Its function is as follows. Required for maturation of 30S ribosomal subunits. The polypeptide is Ribosome maturation factor RimP (Marinobacter nauticus (strain ATCC 700491 / DSM 11845 / VT8) (Marinobacter aquaeolei)).